A 279-amino-acid chain; its full sequence is Protoheme IX farnesyltransferase (279 aa).

A run of 9 helical transmembrane segments spans residues 5–25, 33–53, 84–103, 108–125, 133–153, 159–179, 201–221, 222–242, and 256–276; these read LILL…AGYL, IAQA…AAAF, LAYS…LLLG, LFVF…TVIL, ILGG…LGAG, AVLI…ALAY, AAVA…MTLY, LAFG…VATI, and AMWK…LALI.

It belongs to the UbiA prenyltransferase family. Protoheme IX farnesyltransferase subfamily.

It is found in the cell membrane. It catalyses the reaction heme b + (2E,6E)-farnesyl diphosphate + H2O = Fe(II)-heme o + diphosphate. The protein operates within porphyrin-containing compound metabolism; heme O biosynthesis; heme O from protoheme: step 1/1. Converts heme B (protoheme IX) to heme O by substitution of the vinyl group on carbon 2 of heme B porphyrin ring with a hydroxyethyl farnesyl side group. This is Protoheme IX farnesyltransferase from Pyrobaculum arsenaticum (strain DSM 13514 / JCM 11321 / PZ6).